We begin with the raw amino-acid sequence, 167 residues long: NADH-ubiquinone oxidoreductase chain 6 (167 aa).

5 helical membrane passes run 1-21 (MKMMVVFLFSILLVFGFVAFA), 27-47 (VYGGLSLVVSGGLGCAIVVSL), 50-70 (VFLGLIVFLIYLGGMLVVFGY), 88-108 (VALSMLLFTVIVESAWYLMSG), and 143-163 (WALVLLGWILFITIYVVLEVV).

Belongs to the complex I subunit 6 family. As to quaternary structure, core subunit of respiratory chain NADH dehydrogenase (Complex I) which is composed of 45 different subunits.

The protein localises to the mitochondrion inner membrane. It catalyses the reaction a ubiquinone + NADH + 5 H(+)(in) = a ubiquinol + NAD(+) + 4 H(+)(out). Functionally, core subunit of the mitochondrial membrane respiratory chain NADH dehydrogenase (Complex I) which catalyzes electron transfer from NADH through the respiratory chain, using ubiquinone as an electron acceptor. Essential for the catalytic activity and assembly of complex I. The polypeptide is NADH-ubiquinone oxidoreductase chain 6 (MT-ND6) (Osphranter robustus (Wallaroo)).